Here is a 1016-residue protein sequence, read N- to C-terminus: FHIP family protein Bm1_18400 (1016 aa).

Disordered regions lie at residues 586 to 608 (DSLRQHTPPPELGEQESSSRSSF) and 757 to 778 (SDGFKSDTNNDNDDEDPAPLGK).

This sequence belongs to the FHIP family.

The chain is FHIP family protein Bm1_18400 from Brugia malayi (Filarial nematode worm).